A 156-amino-acid chain; its full sequence is 6,7-dimethyl-8-ribityllumazine synthase (156 aa).

5-amino-6-(D-ribitylamino)uracil contacts are provided by residues Trp33, 64–66 (SVE), and 86–88 (VIL). (2S)-2-hydroxy-3-oxobutyl phosphate is bound at residue 91–92 (ET). The active-site Proton donor is the His94. Position 119 (Ile119) interacts with 5-amino-6-(D-ribitylamino)uracil. Arg133 is a binding site for (2S)-2-hydroxy-3-oxobutyl phosphate.

This sequence belongs to the DMRL synthase family.

The catalysed reaction is (2S)-2-hydroxy-3-oxobutyl phosphate + 5-amino-6-(D-ribitylamino)uracil = 6,7-dimethyl-8-(1-D-ribityl)lumazine + phosphate + 2 H2O + H(+). It functions in the pathway cofactor biosynthesis; riboflavin biosynthesis; riboflavin from 2-hydroxy-3-oxobutyl phosphate and 5-amino-6-(D-ribitylamino)uracil: step 1/2. Its function is as follows. Catalyzes the formation of 6,7-dimethyl-8-ribityllumazine by condensation of 5-amino-6-(D-ribitylamino)uracil with 3,4-dihydroxy-2-butanone 4-phosphate. This is the penultimate step in the biosynthesis of riboflavin. This Tropheryma whipplei (strain TW08/27) (Whipple's bacillus) protein is 6,7-dimethyl-8-ribityllumazine synthase.